Here is a 361-residue protein sequence, read N- to C-terminus: MRILVAMSGGVDSSVVAALLKRQGHEVIGATLQLYDHGQAAKPGACCAGRDIMDARAVADRLGFPHYVIDAESRFRDSVVESFADAYARGETPVPCVACNQGVKFTDLLGMARDLGCEAMATGHYVRRVEGPEGAEMHRPVDAERDQTWFLFATTKDQLDYLRFPLGEMPDKAHVRALAQELGLEIAAKPDSQDICFVPSGSYAELVEKLRPEVRGEGEIVDEDGRVLGRHEGVARYTVGQSKRLGDIHTATGERQMVTRIDVPKRRIVVGPRVQVSEADSRRSVRLRDMNWLIDAPAEGVRCGVQIRAREKLREALVKPLENGGALVELTEAAMPAPGQACVLYDGSRVLGGGFITAGDA.

ATP contacts are provided by residues 6–13 and Leu-32; that span reads AMSGGVDS. Catalysis depends on Cys-99, which acts as the Nucleophile. A disulfide bond links Cys-99 and Cys-196. Gly-123 serves as a coordination point for ATP. Residues 145–147 are interaction with tRNA; it reads RDQ. The Cysteine persulfide intermediate role is filled by Cys-196.

The protein belongs to the MnmA/TRMU family.

It is found in the cytoplasm. The catalysed reaction is S-sulfanyl-L-cysteinyl-[protein] + uridine(34) in tRNA + AH2 + ATP = 2-thiouridine(34) in tRNA + L-cysteinyl-[protein] + A + AMP + diphosphate + H(+). Functionally, catalyzes the 2-thiolation of uridine at the wobble position (U34) of tRNA, leading to the formation of s(2)U34. In Gluconobacter oxydans (strain 621H) (Gluconobacter suboxydans), this protein is tRNA-specific 2-thiouridylase MnmA.